The primary structure comprises 356 residues: Phospho-2-dehydro-3-deoxyheptonate aldolase, Tyr-sensitive (356 aa).

Belongs to the class-I DAHP synthase family.

The enzyme catalyses D-erythrose 4-phosphate + phosphoenolpyruvate + H2O = 7-phospho-2-dehydro-3-deoxy-D-arabino-heptonate + phosphate. It functions in the pathway metabolic intermediate biosynthesis; chorismate biosynthesis; chorismate from D-erythrose 4-phosphate and phosphoenolpyruvate: step 1/7. In terms of biological role, stereospecific condensation of phosphoenolpyruvate (PEP) and D-erythrose-4-phosphate (E4P) giving rise to 3-deoxy-D-arabino-heptulosonate-7-phosphate (DAHP). This chain is Phospho-2-dehydro-3-deoxyheptonate aldolase, Tyr-sensitive (aroF), found in Salmonella typhi.